The following is a 144-amino-acid chain: Cell division protein SepF (144 aa).

This sequence belongs to the SepF family. In terms of assembly, homodimer. Interacts with FtsZ.

The protein resides in the cytoplasm. Cell division protein that is part of the divisome complex and is recruited early to the Z-ring. Probably stimulates Z-ring formation, perhaps through the cross-linking of FtsZ protofilaments. Its function overlaps with FtsA. The polypeptide is Cell division protein SepF (Geobacillus sp. (strain WCH70)).